We begin with the raw amino-acid sequence, 90 residues long: Bombyxin D-1 (90 aa).

An N-terminal signal peptide occupies residues 1–18 (MKLLGFFLSWVSVCAIVS). 3 disulfide bridges follow: Cys27/Cys77, Cys39/Cys90, and Cys76/Cys81. Positions 48 to 68 (SVAHYAGYGWPLLPSLSEERG) are cleaved as a propeptide — c peptide like.

It belongs to the insulin family. As to quaternary structure, heterodimer of a B chain and an A chain linked by two disulfide bonds.

The protein resides in the secreted. In terms of biological role, brain peptide responsible for activation of prothoracic glands to produce ecdysone in insects. The sequence is that of Bombyxin D-1 (BBXD1) from Bombyx mori (Silk moth).